Here is a 745-residue protein sequence, read N- to C-terminus: Polyribonucleotide nucleotidyltransferase (745 aa).

Residues Asp-487 and Asp-493 each coordinate Mg(2+). The KH domain occupies 554–613; the sequence is PSTTTIKIDKDKIRDIIGPGGKVIKEICEISGAKIDISDDGTVSIYASDRDKLKVALDKI. The 69-residue stretch at 623–691 folds into the S1 motif domain; it reads GEIFNGTVMK…NKGKAKLTIK (69 aa). The segment at 691–745 is disordered; that stretch reads KNADKDKSSNNTKPKTNAKDNSEPEQRRDSSKKRAWNEDNNAETAEVITERKYFN. The span at 707-719 shows a compositional bias: basic and acidic residues; that stretch reads NAKDNSEPEQRRD.

The protein belongs to the polyribonucleotide nucleotidyltransferase family. It depends on Mg(2+) as a cofactor.

It localises to the cytoplasm. It carries out the reaction RNA(n+1) + phosphate = RNA(n) + a ribonucleoside 5'-diphosphate. In terms of biological role, involved in mRNA degradation. Catalyzes the phosphorolysis of single-stranded polyribonucleotides processively in the 3'- to 5'-direction. This chain is Polyribonucleotide nucleotidyltransferase, found in Rickettsia massiliae (strain Mtu5).